The following is a 292-amino-acid chain: Phosphatidylserine decarboxylase proenzyme (292 aa).

Catalysis depends on charge relay system; for autoendoproteolytic cleavage activity residues Asp-89, His-146, and Ser-252. The active-site Schiff-base intermediate with substrate; via pyruvic acid; for decarboxylase activity is the Ser-252. Residue Ser-252 is modified to Pyruvic acid (Ser); by autocatalysis.

Belongs to the phosphatidylserine decarboxylase family. PSD-B subfamily. Prokaryotic type I sub-subfamily. Heterodimer of a large membrane-associated beta subunit and a small pyruvoyl-containing alpha subunit. Pyruvate serves as cofactor. Post-translationally, is synthesized initially as an inactive proenzyme. Formation of the active enzyme involves a self-maturation process in which the active site pyruvoyl group is generated from an internal serine residue via an autocatalytic post-translational modification. Two non-identical subunits are generated from the proenzyme in this reaction, and the pyruvate is formed at the N-terminus of the alpha chain, which is derived from the carboxyl end of the proenzyme. The autoendoproteolytic cleavage occurs by a canonical serine protease mechanism, in which the side chain hydroxyl group of the serine supplies its oxygen atom to form the C-terminus of the beta chain, while the remainder of the serine residue undergoes an oxidative deamination to produce ammonia and the pyruvoyl prosthetic group on the alpha chain. During this reaction, the Ser that is part of the protease active site of the proenzyme becomes the pyruvoyl prosthetic group, which constitutes an essential element of the active site of the mature decarboxylase.

Its subcellular location is the cell membrane. The enzyme catalyses a 1,2-diacyl-sn-glycero-3-phospho-L-serine + H(+) = a 1,2-diacyl-sn-glycero-3-phosphoethanolamine + CO2. It participates in phospholipid metabolism; phosphatidylethanolamine biosynthesis; phosphatidylethanolamine from CDP-diacylglycerol: step 2/2. Its function is as follows. Catalyzes the formation of phosphatidylethanolamine (PtdEtn) from phosphatidylserine (PtdSer). The polypeptide is Phosphatidylserine decarboxylase proenzyme (Shewanella sp. (strain MR-7)).